A 360-amino-acid polypeptide reads, in one-letter code: Outer membrane protein P2 (360 aa).

An N-terminal signal peptide occupies residues Met1–Ala20.

It belongs to the Gram-negative porin family. In terms of assembly, homotrimer.

The protein localises to the cell outer membrane. Forms pores that allow passive diffusion of small molecules across the outer membrane. This chain is Outer membrane protein P2 (ompP2), found in Haemophilus influenzae.